The primary structure comprises 656 residues: Membrane-associated tyrosine- and threonine-specific cdc2-inhibitory kinase wee-1.3 (656 aa).

Positions 1 to 11 (MDETENNTSID) are enriched in polar residues. Positions 1–24 (MDETENNTSIDSVEVGPSSPRVVA) are disordered. One can recognise a Protein kinase domain in the interval 107–354 (FQIDEIIGRG…SDALRKHLSI (248 aa)). Residues 113–121 (IGRGSFGEV) and K136 each bind ATP. The Proton acceptor role is filled by D227. Mg(2+) contacts are provided by N232 and D245. Disordered stretches follow at residues 449–552 (PFDF…NSSI) and 617–656 (KGKE…GDEN). A compositionally biased stretch (polar residues) spans 486-505 (ATCSSSNSSAIETAEDSLSS). A compositionally biased stretch (basic and acidic residues) spans 617–631 (KGKEKPVVEPAELRQ). Over residues 646 to 656 (ASFQGSSGDEN) the composition is skewed to polar residues.

The protein belongs to the protein kinase superfamily. Ser/Thr protein kinase family. WEE1 subfamily.

It localises to the golgi apparatus membrane. It is found in the cytoplasm. It carries out the reaction L-seryl-[protein] + ATP = O-phospho-L-seryl-[protein] + ADP + H(+). The catalysed reaction is L-threonyl-[protein] + ATP = O-phospho-L-threonyl-[protein] + ADP + H(+). Its function is as follows. Acts as a negative regulator of entry into mitosis (G2 to M transition) by phosphorylation of the CDK1 kinase during oocyte maturation. Required for embryonic development, germline proliferation and initiation of meiosis during spermatogenesis. Required for chromosome structure during mitosis and negative regulation of nuclear envelope breakdown. The chain is Membrane-associated tyrosine- and threonine-specific cdc2-inhibitory kinase wee-1.3 from Caenorhabditis briggsae.